The chain runs to 296 residues: dTDP-4-dehydrorhamnose reductase (296 aa).

NADH is bound by residues 10–12 (GQI), 35–36 (DL), and 59–61 (AYT). Residues 11–12 (QI), 35–36 (DL), and 59–61 (AYT) each bind NADPH. Position 100 to 101 (100 to 101 (TD)) interacts with dTDP-beta-L-rhamnose. The NADH site is built by Tyr124 and Lys128. NADPH is bound by residues Tyr124 and Lys128. Catalysis depends on Tyr124, which acts as the Proton donor/acceptor. Trp149 provides a ligand contact to dTDP-beta-L-rhamnose.

It belongs to the dTDP-4-dehydrorhamnose reductase family. As to quaternary structure, homodimer. Requires Mg(2+) as cofactor.

It carries out the reaction dTDP-beta-L-rhamnose + NADP(+) = dTDP-4-dehydro-beta-L-rhamnose + NADPH + H(+). It participates in carbohydrate biosynthesis; dTDP-L-rhamnose biosynthesis. Functionally, involved in the biosynthesis of the dTDP-L-rhamnose which is an important component of lipopolysaccharide (LPS). Catalyzes the reduction of dTDP-6-deoxy-L-lyxo-4-hexulose to yield dTDP-L-rhamnose. RmlD uses NADH and NADPH nearly equally well. The protein is dTDP-4-dehydrorhamnose reductase of Sinorhizobium fredii (strain NBRC 101917 / NGR234).